Here is a 63-residue protein sequence, read N- to C-terminus: Hypoxia-inducible lipid droplet-associated protein (63 aa).

Residues 1 to 37 (MKHVLNLYLLGVVLTLLSIFVRVMESLEGLLESPSPG) form a required for targeting to lipid droplets region. The helical transmembrane segment at 7–23 (LYLLGVVLTLLSIFVRV) threads the bilayer. Residues 31–63 (LESPSPGTSWTTRSQLANTEPTKGLPDHPSRSM) form a disordered region. Polar residues predominate over residues 35–51 (SPGTSWTTRSQLANTEP). At Ser44 the chain carries Phosphoserine.

Highly expressed in renal cell carcinoma cells but barely detectable in adjacent normal kidney tissue. Detected in some cervical and endometrial cancers. Expression also detected in fetal kidney with little or no expression observed in normal adult heart, liver, lung, pancreas, prostate or spinal cord (at protein level).

It is found in the lipid droplet. The protein resides in the secreted. The protein localises to the membrane. Functionally, increases intracellular lipid accumulation. Stimulates expression of cytokines including IL6, MIF and VEGFA. Enhances cell growth and proliferation. In Homo sapiens (Human), this protein is Hypoxia-inducible lipid droplet-associated protein (HILPDA).